Here is a 92-residue protein sequence, read N- to C-terminus: Sugar fermentation stimulation protein B (92 aa).

The segment at residues Glu50–Tyr69 is a DNA-binding region (H-T-H motif).

It belongs to the ner transcriptional regulatory family.

Its function is as follows. This protein is involved in positive regulation of the metabolism of sugars. This Escherichia coli O157:H7 protein is Sugar fermentation stimulation protein B (sfsB).